A 93-amino-acid chain; its full sequence is UPF0298 protein GWCH70_0997 (93 aa).

Belongs to the UPF0298 family.

The protein resides in the cytoplasm. The sequence is that of UPF0298 protein GWCH70_0997 from Geobacillus sp. (strain WCH70).